Reading from the N-terminus, the 463-residue chain is Argininosuccinate lyase (463 aa).

Belongs to the lyase 1 family. Argininosuccinate lyase subfamily.

It localises to the cytoplasm. It catalyses the reaction 2-(N(omega)-L-arginino)succinate = fumarate + L-arginine. It functions in the pathway amino-acid biosynthesis; L-arginine biosynthesis; L-arginine from L-ornithine and carbamoyl phosphate: step 3/3. This is Argininosuccinate lyase from Methylorubrum extorquens (strain CM4 / NCIMB 13688) (Methylobacterium extorquens).